The following is a 139-amino-acid chain: MGVLNEFKAFAVKGNVVDMAVGIIIGAAFGKIVSSFVGDVIMPPLGLLIGGVDFSDLAITLKAAEGDVPAVVLAYGKFIQTVIDFVIVAFAIFMGVKAINKLKREEAVAPTTPPVPSAEETLLTEIRDLLKTQNQNRLP.

Helical transmembrane passes span 9–29 (AFAVKGNVVDMAVGIIIGAAF) and 79–99 (IQTVIDFVIVAFAIFMGVKAI).

This sequence belongs to the MscL family. Homopentamer.

The protein localises to the cell inner membrane. In terms of biological role, channel that opens in response to stretch forces in the membrane lipid bilayer. May participate in the regulation of osmotic pressure changes within the cell. In Pseudomonas putida (strain ATCC 700007 / DSM 6899 / JCM 31910 / BCRC 17059 / LMG 24140 / F1), this protein is Large-conductance mechanosensitive channel.